Consider the following 574-residue polypeptide: Developmental and secondary metabolism regulator veA (574 aa).

Disordered regions lie at residues Met-1 to Thr-22, Glu-39 to Pro-60, Arg-255 to Lys-500, and Arg-513 to Phe-548. The region spanning Gly-25–Arg-230 is the Velvet domain. Residues Glu-39–Cys-44 carry the Nuclear localization signal motif. 2 stretches are compositionally biased toward pro residues: residues Arg-314 to Ala-323 and Pro-330 to His-341. Polar residues-rich tracts occupy residues Pro-343–Pro-359, His-385–Glu-394, Tyr-402–Pro-415, and Val-448–Thr-458. The PEST stretch occupies residues Gln-457 to Lys-501. 2 stretches are compositionally biased toward low complexity: residues Pro-459–Ser-474 and Ser-482–Ser-493. 2 stretches are compositionally biased toward basic and acidic residues: residues Arg-513 to Pro-525 and Pro-532 to Asp-543.

It belongs to the velvet family. VeA subfamily. As to quaternary structure, component of the heterotrimeric velvet complex composed of laeA, veA and velB; VeA acting as a bridging protein between laeA and velB.

It is found in the nucleus. It localises to the cytoplasm. Component of the velvet transcription factor complex that controls sexual/asexual developmental ratio in response to light, promoting sexual development in the darkness while stimulating asexual sporulation under illumination. The velvet complex hat acts as a global regulator for secondary metabolite gene expression. Controls the expression of the aflatoxin gene cluster. Required for the expression of aflR and aflJ. Mediates the coordination of aflatoxigenic vesicles (aflatoxisomes) development with aflatoxin gene expression. Regulates branched chain amino acid and ethanol metabolism and acts as a positive regulator of mitochondrial and peroxisomal beta-oxidation. The sequence is that of Developmental and secondary metabolism regulator veA from Aspergillus parasiticus.